Consider the following 478-residue polypeptide: 3-isopropylmalate dehydratase large subunit (478 aa).

Residues Cys347, Cys407, and Cys410 each contribute to the [4Fe-4S] cluster site.

It belongs to the aconitase/IPM isomerase family. LeuC type 1 subfamily. In terms of assembly, heterodimer of LeuC and LeuD. It depends on [4Fe-4S] cluster as a cofactor.

The catalysed reaction is (2R,3S)-3-isopropylmalate = (2S)-2-isopropylmalate. The protein operates within amino-acid biosynthesis; L-leucine biosynthesis; L-leucine from 3-methyl-2-oxobutanoate: step 2/4. Its function is as follows. Catalyzes the isomerization between 2-isopropylmalate and 3-isopropylmalate, via the formation of 2-isopropylmaleate. The protein is 3-isopropylmalate dehydratase large subunit of Prochlorococcus marinus (strain MIT 9303).